A 2211-amino-acid chain; its full sequence is Nonribosomal peptide synthetase 13 (2211 aa).

Residues 76–475 are adenylation 1; it reads TYAELDSLSD…IEHHLQLTLP (400 aa). The Carrier 1 domain maps to 594–671; that stretch reads PPSTPKEATI…EQSKRAGLIQ (78 aa). An O-(pantetheine 4'-phosphoryl)serine modification is found at Ser-631. The interval 710–975 is condensation 1; it reads EDIYPCTALQ…IATVPTRIRV (266 aa). Positions 1169 to 1563 are adenylation 2; that stretch reads TYRELWAHSS…LGAVEASVMR (395 aa). One can recognise a Carrier 2 domain in the interval 1677 to 1756; it reads PMSDDNERRL…RSRHLITEQA (80 aa). Ser-1714 bears the O-(pantetheine 4'-phosphoryl)serine mark. The tract at residues 1814–2069 is condensation 2; it reads HFQFDLSGAV…CTNYIPYRLS (256 aa).

It belongs to the NRP synthetase family.

The catalysed reaction is L-proline + L-tryptophan + 2 ATP = brevianamide F + 2 AMP + 2 diphosphate + 2 H(+). The protein operates within mycotoxin biosynthesis. Its function is as follows. Nonribosomal peptide synthetase; part of the gene cluster that mediates the biosynthesis of fumitremorgins, indole alkaloids that carry not only intriguing chemical structures, but also interesting biological and pharmacological activities. The biosynthesis of fumitremorgin-type alkaloids begins by condensation of the two amino acids L-tryptophan and L-proline to brevianamide F, catalyzed by the non-ribosomal peptide synthetase ftmA. Brevianamide F is then prenylated by the prenyltransferase ftmPT1/ftmB in the presence of dimethylallyl diphosphate, resulting in the formation of tryprostatin B. The three cytochrome P450 monooxygenases, ftmP450-1/ftmC, ftmP450-2/ftmE and ftmP450-3/FtmG, are responsible for the conversion of tryprostatin B to 6-hydroxytryprostatin B, tryprostatin A to fumitremorgin C and fumitremorgin C to 12,13-dihydroxyfumitremorgin C, respectively. The putative methyltransferase ftmMT/ftmD is expected for the conversion of 6-hydroxytryprostatin B to tryprostatin A. FtmPT2/FtmH catalyzes the prenylation of 12,13-dihydroxyfumitre-morgin C in the presence of dimethylallyl diphosphate, resulting in the formation of fumitremorgin B. Fumitremorgin B is further converted to verruculogen by ftmOx1/ftmF via the insertion of an endoperoxide bond between the two prenyl moieties. In some fungal species, verruculogen is further converted to fumitremorgin A, but the enzymes involved in this step have not been identified yet. This chain is Nonribosomal peptide synthetase 13, found in Aspergillus fumigatus (strain ATCC MYA-4609 / CBS 101355 / FGSC A1100 / Af293) (Neosartorya fumigata).